The sequence spans 311 residues: Phosphopantothenate--cysteine ligase (311 aa).

Residue alanine 2 is modified to N-acetylalanine.

This sequence belongs to the PPC synthetase family. In terms of assembly, homodimer.

The catalysed reaction is (R)-4'-phosphopantothenate + L-cysteine + ATP = N-[(R)-4-phosphopantothenoyl]-L-cysteine + AMP + diphosphate + H(+). The enzyme catalyses (R)-4'-phosphopantothenate + L-cysteine + CTP = N-[(R)-4-phosphopantothenoyl]-L-cysteine + CMP + diphosphate + H(+). It participates in cofactor biosynthesis; coenzyme A biosynthesis; CoA from (R)-pantothenate: step 2/5. In terms of biological role, catalyzes the second step in the biosynthesis of coenzyme A from vitamin B5, where cysteine is conjugated to 4'-phosphopantothenate to form 4-phosphopantothenoylcysteine. Has a preference for ATP over CTP as a cosubstrate. This is Phosphopantothenate--cysteine ligase (Ppcs) from Mus musculus (Mouse).